A 317-amino-acid chain; its full sequence is Putative HTH-type transcriptional regulatory protein Mboo_0195 (317 aa).

Positions 132–185 (LRELRERRSMSLGDLGQVLGVSRRTISKYESGMGTTLEVAIRIEEYFNTGVVES) constitute an HTH cro/C1-type domain. Residues 143–162 (LGDLGQVLGVSRRTISKYES) constitute a DNA-binding region (H-T-H motif).

In Methanoregula boonei (strain DSM 21154 / JCM 14090 / 6A8), this protein is Putative HTH-type transcriptional regulatory protein Mboo_0195.